Here is a 340-residue protein sequence, read N- to C-terminus: MTLVGNFSPLVLVGDSDRVEAETVGAYLDGWAGHDKVRLATANAIKAILSGAGRLVGRIARGYLPGDPGKLVGVNSDQDQQKSIDVGSHNLFVELLIAAGVASILSEEADLPVAGKADGLVAVAIDPLDGSGNVGLGAPLGTIFSIFPADVEEPFLQPGNRQIAAGYVSYGNSVDLGFSVGEGVIFATLDPVSGQFHITRRNVKLPERTSDLAFNASVQRHLSAGMQAYVNDAFLGKDGPRGRNFNMRWLGAAVGDMHRIMQRGGLFFYVNDSRPGYEKGRLRLVYEANPIAFLAREAGGKATDGSRPILDIVPQTYHERSALVFGVAEELDILGEYFVK.

Mg(2+)-binding residues include Glu107, Asp126, Leu128, and Asp129. Asn215 contributes to the substrate binding site. Glu287 contributes to the Mg(2+) binding site.

This sequence belongs to the FBPase class 1 family. Homotetramer. It depends on Mg(2+) as a cofactor.

Its subcellular location is the cytoplasm. It catalyses the reaction beta-D-fructose 1,6-bisphosphate + H2O = beta-D-fructose 6-phosphate + phosphate. Its pathway is carbohydrate biosynthesis; gluconeogenesis. This Brucella suis biovar 1 (strain 1330) protein is Fructose-1,6-bisphosphatase class 1.